We begin with the raw amino-acid sequence, 128 residues long: Large ribosomal subunit protein bL12 (128 aa).

This sequence belongs to the bacterial ribosomal protein bL12 family. Homodimer. Part of the ribosomal stalk of the 50S ribosomal subunit. Forms a multimeric L10(L12)X complex, where L10 forms an elongated spine to which 2 to 4 L12 dimers bind in a sequential fashion. Binds GTP-bound translation factors.

Forms part of the ribosomal stalk which helps the ribosome interact with GTP-bound translation factors. Is thus essential for accurate translation. This chain is Large ribosomal subunit protein bL12, found in Petrotoga mobilis (strain DSM 10674 / SJ95).